We begin with the raw amino-acid sequence, 1605 residues long: Sister chromatid cohesion protein PDS5 homolog A (1605 aa).

HEAT repeat units follow at residues 50–89 (KSIQ…ITAP), 96–136 (NIMK…YRSC), 146–183 (DLVK…EESE), 184–221 (DVQE…HCAP), 261–298 (QALS…LPGR), 302–339 (EEFD…SDPL), 341–378 (AEAS…SALT), 380–416 (IPVD…VYCL), 552–591 (ANIW…LYDF), 644–681 (SLFD…TIRE), 723–758 (KSLS…IAMP), 821–860 (AGVD…AAKA), 961–1000 (LYPH…QLYL), and 1050–1088 (HAIC…KPSE). 2 disordered regions span residues 1155-1182 (LRAQ…KNDV) and 1203-1262 (ESSN…PKVQ). A compositionally biased stretch (basic and acidic residues) spans 1211–1225 (SPSERAEICQRDQKG). Positions 1226 to 1233 (NKRNVGDA) match the Nuclear localization signal 1 motif. Ser1274 carries the phosphoserine modification. Basic and acidic residues predominate over residues 1279–1295 (NVSLDSHDENSDQEKML). 3 disordered regions span residues 1279-1307 (NVSL…KKSL), 1324-1353 (ERSR…SGLA), and 1423-1605 (GKTA…RTAI). Ser1299 is subject to Phosphoserine. 2 stretches are compositionally biased toward basic residues: residues 1425 to 1442 (TAKK…KRSS) and 1464 to 1476 (KGKR…LKQL). A Nuclear localization signal 2 motif is present at residues 1426-1433 (AKKSRTSK). Composition is skewed to basic and acidic residues over residues 1477-1495 (HPKD…VESR), 1514-1527 (GEEK…SLKE), and 1534-1574 (VVNK…NEME). Phosphoserine occurs at positions 1524, 1562, and 1584. Positions 1575 to 1585 (REAEENAETSD) are enriched in acidic residues. Thr1588 carries the phosphothreonine modification.

It belongs to the PDS5 family. As to quaternary structure, interacts with the cohesin complex. Interacts with DEK3.

The protein resides in the nucleus. Its function is as follows. Cohesin cofactor dispensable during the meiotic division but playing an important role in DNA repair by homologous recombination (HR) probably by helping SMC5/SMC6 complex. Regulator of sister chromatid cohesion in mitosis which may stabilize cohesin complex association with chromatin. May couple sister chromatid cohesion during mitosis to DNA replication. Cohesion ensures that chromosome partitioning is accurate in both meiotic and mitotic cells and plays an important role in DNA repair. The polypeptide is Sister chromatid cohesion protein PDS5 homolog A (Arabidopsis thaliana (Mouse-ear cress)).